The sequence spans 845 residues: SLIT and NTRK-like protein 2 (845 aa).

A signal peptide spans 1–21; that stretch reads MLSGVWFLSVLTVAGILQTES. Over 22 to 621 the chain is Extracellular; sequence RKTAKDICKI…LHTEVPLSVL (600 aa). Disulfide bonds link Cys-29–Cys-35 and Cys-33–Cys-46. LRR repeat units follow at residues 63–84, 87–108, 111–132, 135–156, 159–180, and 182–203; these read RIYQ…EFVN, NAVT…AFSG, TLKR…TFLG, SLEY…AFSK, KLKV…VFRF, and LLTH…GVLE. An N-linked (GlcNAc...) asparagine glycan is attached at Asn-84. A required for interaction with PTPRD region spans residues 167–215; it reads DNLLLSLPSNVFRFVLLTHLDLRGNRLKVMPFAGVLEHIGGIMEIQLEE. An LRRCT 1 domain is found at 216–265; sequence NPWNCTCDLLPLKAWLDTITVFVGEIVCETPFRLHGKDVTQLTRQDLCPR. 2 disulfide bridges follow: Cys-220-Cys-243 and Cys-222-Cys-263. The interval 263–321 is disordered; that stretch reads CPRKSASDSSQRGSHADTHVQRLSPTMNPALNPTRAPKASRPPKMRNRPTPRVTVSKDR. Residues 283-293 are compositionally biased toward polar residues; it reads QRLSPTMNPAL. Positions 331 to 373 constitute an LRRNT domain; it reads QTKSPVPLTCPSSCVCTSQSSDNGLNVNCQERKFTNISDLQPK. LRR repeat units lie at residues 376–397, 400–421, 424–445, 448–469, 472–493, and 495–516; these read SPKK…DLLE, SLDL…AFTN, SLRR…MFDG, SLQY…TFDA, NLQL…IFGG, and ALTR…GVLD. Residue Asn-421 is glycosylated (N-linked (GlcNAc...) asparagine). The LRRCT 2 domain maps to 529 to 580; it reads NPWDCTCDIMGLKDWTEHANSPVIINEVTCESPAKHAGEILKFLGREAICPD. The chain crosses the membrane as a helical span at residues 622-642; sequence ILGLLVVFILSVCFGAGLFVF. The Cytoplasmic segment spans residues 643-845; that stretch reads VLKRRKGVPS…LEKQTAISQL (203 aa). At Tyr-756 the chain carries Phosphotyrosine.

It belongs to the SLITRK family. In terms of assembly, interacts with PTPRD; this interaction is PTPRD splicing-dependent and may induce pre-synaptic differentiation. Interacts with NTRK2. As to expression, expressed predominantly in the cerebral cortex of the brain but also at low levels in the spinal cord and medulla. Also expressed in some astrocytic brain tumors such as astrocytomas, oligodendrogliomas, glioblastomas, gangliogliomas and primitive neuroectodermal tumors.

It is found in the membrane. The protein localises to the cell membrane. The protein resides in the cell projection. It localises to the dendrite. Functionally, it is involved in synaptogenesis and promotes excitatory synapse differentiation. Suppresses neurite outgrowth. Involved in the negative regulation of NTRK2. This is SLIT and NTRK-like protein 2 (SLITRK2) from Homo sapiens (Human).